Reading from the N-terminus, the 421-residue chain is Glycosaminoglycan xylosylkinase homolog (421 aa).

Residues 1-21 (MNKRSVIIAGIVASLLGLALG) form the signal peptide. An N-linked (GlcNAc...) asparagine glycan is attached at asparagine 83. The ATP site is built by glutamine 131 and lysine 147. Aspartate 166 lines the Mn(2+) pocket. 2 disulfide bridges follow: cysteine 225–cysteine 240 and cysteine 230–cysteine 233. 252 to 255 (IYIV) provides a ligand contact to ATP. Disulfide bonds link cysteine 285–cysteine 351 and cysteine 352–cysteine 409. The active site involves aspartate 314. Glutamate 319 and aspartate 329 together coordinate ATP. Aspartate 329 is a binding site for Mn(2+).

Belongs to the FAM20 family. Requires Mn(2+) as cofactor.

Its subcellular location is the golgi apparatus. The protein resides in the endoplasmic reticulum. The catalysed reaction is 3-O-(beta-D-galactosyl-(1-&gt;3)-beta-D-galactosyl-(1-&gt;4)-beta-D-xylosyl)-L-seryl-[protein] + ATP = 3-O-(beta-D-galactosyl-(1-&gt;3)-beta-D-galactosyl-(1-&gt;4)-beta-D-2-O-phosphoxylosyl)-L-seryl-[protein] + ADP + H(+). In terms of biological role, kylose kinase that mediates the 2-O-phosphorylation of xylose in the glycosaminoglycan-protein linkage region of proteoglycans. This is Glycosaminoglycan xylosylkinase homolog from Drosophila melanogaster (Fruit fly).